The chain runs to 269 residues: Putative 6-phosphogluconolactonase (269 aa).

The segment at 248-269 (DAATGVPDRDSSDSDSPPPFDG) is disordered.

It belongs to the glucosamine/galactosamine-6-phosphate isomerase family. 6-phosphogluconolactonase subfamily.

It is found in the nucleus. It carries out the reaction 6-phospho-D-glucono-1,5-lactone + H2O = 6-phospho-D-gluconate + H(+). Its pathway is carbohydrate degradation; pentose phosphate pathway; D-ribulose 5-phosphate from D-glucose 6-phosphate (oxidative stage): step 2/3. Hydrolysis of 6-phosphogluconolactone to 6-phosphogluconate. The protein is Putative 6-phosphogluconolactonase of Caenorhabditis elegans.